Here is a 603-residue protein sequence, read N- to C-terminus: DNA mismatch repair protein MutL (603 aa).

Residues 336–346 (EVSKKQKEQQK) are compositionally biased toward basic and acidic residues. Disordered stretches follow at residues 336 to 355 (EVSKKQKEQQKSEQIQMSFE) and 361 to 384 (KETPTLFSKPNVPEYVPSDEDTSR).

It belongs to the DNA mismatch repair MutL/HexB family.

Functionally, this protein is involved in the repair of mismatches in DNA. It is required for dam-dependent methyl-directed DNA mismatch repair. May act as a 'molecular matchmaker', a protein that promotes the formation of a stable complex between two or more DNA-binding proteins in an ATP-dependent manner without itself being part of a final effector complex. The chain is DNA mismatch repair protein MutL from Listeria welshimeri serovar 6b (strain ATCC 35897 / DSM 20650 / CCUG 15529 / CIP 8149 / NCTC 11857 / SLCC 5334 / V8).